A 267-amino-acid chain; its full sequence is Tryptophan synthase alpha chain (267 aa).

Catalysis depends on proton acceptor residues glutamate 43 and aspartate 54.

It belongs to the TrpA family. As to quaternary structure, tetramer of two alpha and two beta chains.

The catalysed reaction is (1S,2R)-1-C-(indol-3-yl)glycerol 3-phosphate + L-serine = D-glyceraldehyde 3-phosphate + L-tryptophan + H2O. Its pathway is amino-acid biosynthesis; L-tryptophan biosynthesis; L-tryptophan from chorismate: step 5/5. Its function is as follows. The alpha subunit is responsible for the aldol cleavage of indoleglycerol phosphate to indole and glyceraldehyde 3-phosphate. This Bacillus subtilis (strain 168) protein is Tryptophan synthase alpha chain.